Here is a 589-residue protein sequence, read N- to C-terminus: Capsid scaffolding protein (589 aa).

Active-site charge relay system residues include His47, Ser118, and His142. Basic and acidic residues predominate over residues 264 to 273 (EKERPKEPEQ). The interval 264-283 (EKERPKEPEQSHVPTESMSH) is disordered. Positions 307–326 (HDGVYLPKDAFFSLIGASRP) are interaction with pAP. 2 disordered regions span residues 421–478 (RSRS…GDRY) and 514–552 (ASPT…AERG). 2 consecutive short sequence motifs (nuclear localization signal) follow at residues 428–433 (KRRRER) and 453–459 (KARKRLK). Basic residues predominate over residues 453–462 (KARKRLKAHH). Over residues 514 to 543 (ASPTTTTSHQAEASEPQASTAAAAPSTASS) the composition is skewed to low complexity. The segment at 569 to 589 (PPKDMVDLNRRLFVAALNKME) is interaction with major capsid protein.

This sequence belongs to the herpesviridae capsid scaffolding protein family. Homomultimer. Interacts with major capsid protein. In terms of assembly, exists in a monomer-dimer equilibrium with the dimer being the active species. Capsid scaffolding protein is cleaved by assemblin after formation of the spherical procapsid. As a result, the capsid obtains its mature, icosahedral shape. Cleavages occur at two or more sites: release (R-site) and maturation (M-site).

It localises to the host cytoplasm. The protein localises to the host nucleus. The catalysed reaction is Cleaves -Ala-|-Ser- and -Ala-|-Ala- bonds in the scaffold protein.. Acts as a scaffold protein by binding major capsid protein in the cytoplasm, inducing the nuclear localization of both proteins. Multimerizes in the nucleus such as major capsid protein forms the icosahedral T=16 capsid. Autocatalytic cleavage releases the assembly protein, and subsequently abolishes interaction with major capsid protein. Cleavages products are evicted from the capsid before or during DNA packaging. Its function is as follows. Protease that plays an essential role in virion assembly within the nucleus. Catalyzes the cleavage of the assembly protein after formation of the spherical procapsid. By that cleavage, the capsid matures and gains its icosahedral shape. The cleavage sites seem to include -Ala-Ser-, -Ala-Ala-, as well as Ala-Thr bonds. Assemblin and cleavages products are evicted from the capsid before or during DNA packaging. In terms of biological role, plays a major role in capsid assembly. Acts as a scaffold protein by binding major capsid protein. Multimerizes in the nucleus such as major capsid protein forms the icosahedral T=16 capsid. Cleaved by assemblin after capsid completion. The cleavages products are evicted from the capsid before or during DNA packaging. The sequence is that of Capsid scaffolding protein (UL80) from Simian cytomegalovirus (strain Colburn).